Here is a 445-residue protein sequence, read N- to C-terminus: Phosphoglucosamine mutase (445 aa).

The Phosphoserine intermediate role is filled by Ser102. Mg(2+) contacts are provided by Ser102, Asp241, Asp243, and Asp245. Ser102 is subject to Phosphoserine.

The protein belongs to the phosphohexose mutase family. It depends on Mg(2+) as a cofactor. In terms of processing, activated by phosphorylation.

It carries out the reaction alpha-D-glucosamine 1-phosphate = D-glucosamine 6-phosphate. Catalyzes the conversion of glucosamine-6-phosphate to glucosamine-1-phosphate. The polypeptide is Phosphoglucosamine mutase (Haemophilus influenzae (strain 86-028NP)).